Here is a 212-residue protein sequence, read N- to C-terminus: Peptide methionine sulfoxide reductase MsrA (212 aa).

Cysteine 52 is an active-site residue.

This sequence belongs to the MsrA Met sulfoxide reductase family.

The catalysed reaction is L-methionyl-[protein] + [thioredoxin]-disulfide + H2O = L-methionyl-(S)-S-oxide-[protein] + [thioredoxin]-dithiol. It catalyses the reaction [thioredoxin]-disulfide + L-methionine + H2O = L-methionine (S)-S-oxide + [thioredoxin]-dithiol. In terms of biological role, has an important function as a repair enzyme for proteins that have been inactivated by oxidation. Catalyzes the reversible oxidation-reduction of methionine sulfoxide in proteins to methionine. This is Peptide methionine sulfoxide reductase MsrA from Salmonella schwarzengrund (strain CVM19633).